We begin with the raw amino-acid sequence, 407 residues long: 4-hydroxy-3-methylbut-2-en-1-yl diphosphate synthase (flavodoxin) (407 aa).

The [4Fe-4S] cluster site is built by Cys296, Cys299, Cys342, and Glu349.

The protein belongs to the IspG family. [4Fe-4S] cluster serves as cofactor.

It carries out the reaction (2E)-4-hydroxy-3-methylbut-2-enyl diphosphate + oxidized [flavodoxin] + H2O + 2 H(+) = 2-C-methyl-D-erythritol 2,4-cyclic diphosphate + reduced [flavodoxin]. The protein operates within isoprenoid biosynthesis; isopentenyl diphosphate biosynthesis via DXP pathway; isopentenyl diphosphate from 1-deoxy-D-xylulose 5-phosphate: step 5/6. Its function is as follows. Converts 2C-methyl-D-erythritol 2,4-cyclodiphosphate (ME-2,4cPP) into 1-hydroxy-2-methyl-2-(E)-butenyl 4-diphosphate. The polypeptide is 4-hydroxy-3-methylbut-2-en-1-yl diphosphate synthase (flavodoxin) (Methylococcus capsulatus (strain ATCC 33009 / NCIMB 11132 / Bath)).